The chain runs to 265 residues: Sulfur carrier protein FdhD (265 aa).

The active-site Cysteine persulfide intermediate is cysteine 107.

It belongs to the FdhD family.

It is found in the cytoplasm. Required for formate dehydrogenase (FDH) activity. Acts as a sulfur carrier protein that transfers sulfur from IscS to the molybdenum cofactor prior to its insertion into FDH. In Staphylococcus aureus (strain NCTC 8325 / PS 47), this protein is Sulfur carrier protein FdhD.